The primary structure comprises 909 residues: Protein virilizer (909 aa).

The segment covering 746-784 (STSKNTNTNVSKQQQQPQNSTPCSSNRFLFNKSSLISQE) has biased composition (polar residues). Residues 746–824 (STSKNTNTNV…TNMTRQPTTL (79 aa)) are disordered. Residues 785–799 (SNGSNNNSGTQGPGS) show a composition bias toward low complexity. Over residues 800–810 (MNESYSLDNSF) the composition is skewed to polar residues. The segment covering 811-824 (NTTNTNMTRQPTTL) has biased composition (low complexity). Phosphoserine occurs at positions 856 and 898.

This sequence belongs to the vir family. As to quaternary structure, component of the MIS (mRNA N6-methyladenosine (m6A) methylation) complex, at least composed of IME4, KAR4, MUM2, SLZ1, and VIR1. Interacts with KAR4. Interacts with SLZ1. Interacts with MUM2. Interacts with IME4.

The protein localises to the cytoplasm. It localises to the nucleus. Its subcellular location is the nucleolus. Its function is as follows. Component of the MIS complex, a complex that mediates N6-methyladenosine (m6A) methylation of meiotic mRNAs and is required for initiation of meiosis, progression through the meiotic divisions and sporulation. In the complex, performs a scaffolding role stabilizing the other complex members. The protein is Protein virilizer of Saccharomyces cerevisiae (strain ATCC 204508 / S288c) (Baker's yeast).